The sequence spans 311 residues: MIDLLIIAGPTAVGKTDISIELAEKLNGEIISADSMQIYKYMDIGSAKITKDEMKGIPHHLIDVVKPHEEFNVSSFKVLAEKSIKDIWNRGKLPIIAGGTGLYINSLIYNYDFTDADRDEKYREYLTKLAEDKGKEYVHSLLKDIDEKSYEKLYPNDLKRVVRALEVYKITGKSISEYTKENEKKLYDIPYNVNYFVLNMNREVLYERINKRVDIMMGKGLIEEVKKLESMGYTPDMQSMKGIGYKEVLFYLNGDISLDEAIYLIKKGSRNYAKRQLTWFRKDKRSIWIDKDKYSSEEEIVDEIIKMVKDK.

Residue 9-16 (GPTAVGKT) coordinates ATP. A substrate-binding site is contributed by 11 to 16 (TAVGKT). Residues 34–37 (DSMQ) form an interaction with substrate tRNA region.

It belongs to the IPP transferase family. In terms of assembly, monomer. Requires Mg(2+) as cofactor.

It catalyses the reaction adenosine(37) in tRNA + dimethylallyl diphosphate = N(6)-dimethylallyladenosine(37) in tRNA + diphosphate. In terms of biological role, catalyzes the transfer of a dimethylallyl group onto the adenine at position 37 in tRNAs that read codons beginning with uridine, leading to the formation of N6-(dimethylallyl)adenosine (i(6)A). This Clostridium botulinum (strain Loch Maree / Type A3) protein is tRNA dimethylallyltransferase.